Consider the following 601-residue polypeptide: A-type ATP synthase subunit A (601 aa).

Residue glycine 236–threonine 243 participates in ATP binding.

The protein belongs to the ATPase alpha/beta chains family. In terms of assembly, has multiple subunits with at least A(3), B(3), C, D, E, F, H, I and proteolipid K(x).

The protein resides in the cell membrane. The enzyme catalyses ATP + H2O + 4 H(+)(in) = ADP + phosphate + 5 H(+)(out). Functionally, component of the A-type ATP synthase that produces ATP from ADP in the presence of a proton gradient across the membrane. The A chain is the catalytic subunit. This is A-type ATP synthase subunit A from Hyperthermus butylicus (strain DSM 5456 / JCM 9403 / PLM1-5).